Reading from the N-terminus, the 355-residue chain is uncharacterized protein (355 aa).

Catalysis depends on Cys-2, which acts as the For GATase activity. Positions 2–248 constitute a Glutamine amidotransferase type-2 domain; that stretch reads CELLGICFNK…NGELMVFKNG (247 aa).

This is an uncharacterized protein from Methanocaldococcus jannaschii (strain ATCC 43067 / DSM 2661 / JAL-1 / JCM 10045 / NBRC 100440) (Methanococcus jannaschii).